Here is a 763-residue protein sequence, read N- to C-terminus: Phosphoglycerol transferase I (763 aa).

A run of 4 helical transmembrane segments spans residues 1-21, 26-46, 77-97, and 108-128; these read MSEL…AWKA, WWFA…ITLY, ILPG…LGWV, and VGYS…SPAF.

It belongs to the OpgB family.

The protein localises to the cell inner membrane. It catalyses the reaction a phosphatidylglycerol + a membrane-derived-oligosaccharide D-glucose = a 1,2-diacyl-sn-glycerol + a membrane-derived-oligosaccharide 6-(glycerophospho)-D-glucose.. The protein operates within glycan metabolism; osmoregulated periplasmic glucan (OPG) biosynthesis. Functionally, transfers a phosphoglycerol residue from phosphatidylglycerol to the membrane-bound nascent glucan backbones. The chain is Phosphoglycerol transferase I from Salmonella dublin (strain CT_02021853).